Consider the following 600-residue polypeptide: Elongation factor 4 (600 aa).

Residues 4–186 (SKIRNFSIIA…AIVDKIPPPS (183 aa)) form the tr-type G domain. GTP-binding positions include 16-21 (DHGKST) and 133-136 (NKID).

The protein belongs to the TRAFAC class translation factor GTPase superfamily. Classic translation factor GTPase family. LepA subfamily.

It is found in the cell membrane. The catalysed reaction is GTP + H2O = GDP + phosphate + H(+). In terms of biological role, required for accurate and efficient protein synthesis under certain stress conditions. May act as a fidelity factor of the translation reaction, by catalyzing a one-codon backward translocation of tRNAs on improperly translocated ribosomes. Back-translocation proceeds from a post-translocation (POST) complex to a pre-translocation (PRE) complex, thus giving elongation factor G a second chance to translocate the tRNAs correctly. Binds to ribosomes in a GTP-dependent manner. In Mycoplasma capricolum subsp. capricolum (strain California kid / ATCC 27343 / NCTC 10154), this protein is Elongation factor 4.